We begin with the raw amino-acid sequence, 187 residues long: Putative manganese efflux pump MntP (187 aa).

6 helical membrane passes run 3 to 23, 35 to 55, 56 to 76, 107 to 127, 129 to 149, and 166 to 186; these read FYSLIFLSCALGMDAFAVSLC, HYLIVGIYFGGFQALMPTIGY, FIGITFASFIASIDHWIAFIL, LALAIATSIDALAVGVSFAFL, VNLLLAIFLIGIITFILCIIA, and LLGGLVLIILGVKILIEHLFF.

It belongs to the MntP (TC 9.B.29) family.

Its subcellular location is the cell inner membrane. Its function is as follows. Probably functions as a manganese efflux pump. The polypeptide is Putative manganese efflux pump MntP (Campylobacter jejuni (strain RM1221)).